The sequence spans 318 residues: Aspartate carbamoyltransferase catalytic subunit (318 aa).

Positions 66 and 67 each coordinate carbamoyl phosphate. Lys94 contacts L-aspartate. Carbamoyl phosphate is bound by residues Arg116, His144, and Gln147. 2 residues coordinate L-aspartate: Arg177 and Arg231. Carbamoyl phosphate-binding residues include Gly272 and Pro273.

This sequence belongs to the aspartate/ornithine carbamoyltransferase superfamily. ATCase family. Heterododecamer (2C3:3R2) of six catalytic PyrB chains organized as two trimers (C3), and six regulatory PyrI chains organized as three dimers (R2).

It catalyses the reaction carbamoyl phosphate + L-aspartate = N-carbamoyl-L-aspartate + phosphate + H(+). Its pathway is pyrimidine metabolism; UMP biosynthesis via de novo pathway; (S)-dihydroorotate from bicarbonate: step 2/3. Its function is as follows. Catalyzes the condensation of carbamoyl phosphate and aspartate to form carbamoyl aspartate and inorganic phosphate, the committed step in the de novo pyrimidine nucleotide biosynthesis pathway. This Frankia casuarinae (strain DSM 45818 / CECT 9043 / HFP020203 / CcI3) protein is Aspartate carbamoyltransferase catalytic subunit.